The chain runs to 683 residues: Rhophilin-2-A (683 aa).

The REM-1 domain maps to 25-99 (KSIAQTGRSK…LERLNISVEV (75 aa)). In terms of domain architecture, BRO1 spans 110-501 (PLIPLGLKET…TDIFQRLGPL (392 aa)). Positions 515–592 (KICITKEDGD…QSIEIQVISI (78 aa)) constitute a PDZ domain.

The protein belongs to the RHPN family. As to quaternary structure, interacts with RhoA.

The protein resides in the cytoplasm. It localises to the perinuclear region. Functionally, binds specifically to GTP-Rho. The polypeptide is Rhophilin-2-A (rhpn2-a) (Xenopus laevis (African clawed frog)).